Reading from the N-terminus, the 727-residue chain is MPITHEQPNGFHSKQLNGSGIAKAKAMPYPSDLLSHFVKQHLELESYKNGQEIEIDGYSLSISAVSAAARYNAPVILRDSSTIRDRLEKARSVIVEKIEGSKSVYGVSTGFGGSADTRTSNTLALGNALLQHQHSGVLPSTTNTLSVLPLLDPIASTSMPESWVRGAILIRINSLIRGHSGVRWELIAKMVELLQANITPLVPLRGSISASGDLSPLSYVAGTLMGNPSIRVFDGPAAFGARQIVSSVKALEEHNITPISLLAKEHLGILNGTAFSASVASLVLSDVTHLAMLAQVCTAMGTEVLLGERMNYAPFIHAVARPHPGQTEAARTIWDLLSGSKLAHGHEEEVTIDQDQGELRQDRYPLRTAPQFLGPQIEDILSALNTVTLECNSTTDNPLIDGETGDIHHGGNFQAMSVSNAMEKTRLSLHHIGKLLFAQCAELVHPDMNRGLPPSLAATDPSINYHGKGIDIGIAAYVSELGYLANPVSTHIQSAELHNQAVNSLALISARATINSLEVLSLLTSSYLYMLCQAYDLRALQADFRQGLAEIVQEELRAHFSAHIESLDESPLFDKVISSMYKELNHTTTMDAVPRMVKVAGASTSLLVDFFMANQTSDAMSVAALTALPKFRETVALRAAAKLVALREEYLLGARGPAPASAWLGRTRPIYEFIRVTLGIRMHGTENLGVFQQGLGVQDVTIGQNVSLIHEAIRDGKMRGVVVGLFA.

Residue Tyr-105 is the Proton donor/acceptor of the active site. The segment at residues 210–212 (ASG) is a cross-link (5-imidazolinone (Ala-Gly)). Ser-211 is modified (2,3-didehydroalanine (Ser)). (E)-cinnamate is bound by residues Asn-271, Gln-361, Arg-367, Asn-397, Lys-468, Glu-496, and Asn-499.

The protein belongs to the PAL/histidase family. Post-translationally, contains an active site 4-methylidene-imidazol-5-one (MIO), which is formed autocatalytically by cyclization and dehydration of residues Ala-Ser-Gly.

The enzyme catalyses L-phenylalanine = (E)-cinnamate + NH4(+). It participates in mycotoxin biosynthesis. In terms of biological role, phenylalanine ammonia-lyase; part of the gene cluster that mediates the biosynthesis of strobilurin A, an antifungal polyketide that contains a key beta-methoxyacrylate toxophore that targets the complex III of the mitochondrial electron transport chain. Strobilurin biosynthesis begins with construction of benzoyl CoA by step-wise elimination of ammonia from phenylalanine by the phenylalanine ammonia-lyase str11, oxygenation by str8 and retro-Claisen reaction to form benzoic acid, which is activated to its CoA thiolester benzoyl CoA by the dedicated CoA ligase str10. Benzoyl CoA forms the starter unit for the highly reducing polyketide synthase stpks1 that produces the polyketide prestrobilutin A. The FAD-dependent oxygenase str9 then catalyzes the key oxidative rearrangement responsible for the creation of the beta-methoxyacrylate toxophore. Str9 performs epoxidation of the 2,3 olefin of prestrobilutin A, followed by Meinwald rearrangement to furnish the aldehyde intermediate. Rapid enolization of the aldehyde intermediate would give the beta-methoxyacrylate skeleton and methylations catalyzed by str2 and str3 complete the synthesis and lead to the production of strobilurin A. The short-chain dehydrogenase stl2 and the dehydrogenase str4 play a role in the shunt pathway leading to the production of bolineol. The cluster encodes no obvious halogenase gene that could be involved in production of strobilurin B, nor any obvious dimethylallyl-transferase that could be involved in the production of strobilurin G. It is possible that unknown proteins encoded in, or near, the cluster (such as str1 or stl1) may form new classes of halogenases or dimethylally-transferases, or that the responsible genes are located elsewhere on the genome. Similarly, proteins encoded by str5/str6 hydrolases appear to have no chemical role in the biosynthesis of strobilurin A. Finally, no obvious self-resistance gene is found within the cluster. The chain is Phenylalanine ammonia-lyase str11 from Strobilurus tenacellus.